Reading from the N-terminus, the 286-residue chain is Bifunctional protein FolD (286 aa).

Residues Gly-166–Ser-168 and Ser-191 each bind NADP(+).

It belongs to the tetrahydrofolate dehydrogenase/cyclohydrolase family. Homodimer.

It carries out the reaction (6R)-5,10-methylene-5,6,7,8-tetrahydrofolate + NADP(+) = (6R)-5,10-methenyltetrahydrofolate + NADPH. The enzyme catalyses (6R)-5,10-methenyltetrahydrofolate + H2O = (6R)-10-formyltetrahydrofolate + H(+). Its pathway is one-carbon metabolism; tetrahydrofolate interconversion. Functionally, catalyzes the oxidation of 5,10-methylenetetrahydrofolate to 5,10-methenyltetrahydrofolate and then the hydrolysis of 5,10-methenyltetrahydrofolate to 10-formyltetrahydrofolate. In Lactiplantibacillus plantarum (strain ATCC BAA-793 / NCIMB 8826 / WCFS1) (Lactobacillus plantarum), this protein is Bifunctional protein FolD.